The sequence spans 306 residues: Ribokinase (306 aa).

Residues 12–14, 40–44, and glutamate 141 contribute to the substrate site; these read NAD and GKGAN. ATP contacts are provided by residues asparagine 185 and 221–226; that span reads TLGAKG. K(+) contacts are provided by aspartate 247 and threonine 249. 252 to 253 contributes to the ATP binding site; it reads GD. Aspartate 253 lines the substrate pocket. Aspartate 253 (proton acceptor) is an active-site residue. 4 residues coordinate K(+): serine 283, lysine 286, glycine 288, and serine 292.

This sequence belongs to the carbohydrate kinase PfkB family. Ribokinase subfamily. In terms of assembly, homodimer. The cofactor is Mg(2+).

It localises to the cytoplasm. The catalysed reaction is D-ribose + ATP = D-ribose 5-phosphate + ADP + H(+). It functions in the pathway carbohydrate metabolism; D-ribose degradation; D-ribose 5-phosphate from beta-D-ribopyranose: step 2/2. With respect to regulation, activated by a monovalent cation that binds near, but not in, the active site. The most likely occupant of the site in vivo is potassium. Ion binding induces a conformational change that may alter substrate affinity. Functionally, catalyzes the phosphorylation of ribose at O-5 in a reaction requiring ATP and magnesium. The resulting D-ribose-5-phosphate can then be used either for sythesis of nucleotides, histidine, and tryptophan, or as a component of the pentose phosphate pathway. In Haemophilus influenzae (strain ATCC 51907 / DSM 11121 / KW20 / Rd), this protein is Ribokinase.